Consider the following 350-residue polypeptide: Secreted effector protein PipB2 (350 aa).

Pentapeptide repeat domains are found at residues 162 to 201, 202 to 241, 247 to 286, and 287 to 326; these read ANLTAENLCDADLSGADLEGAILFMADCDGANFKGANLSG, ASLGDSNLTNACLEDSIMCGATLDRANLTGANLQHTSLLG, CNCSGANMDHANVSGSTLIRADMSGATLKGATIMAAIMEG, and AVLTRANLQKASFTATNLDGADLSEANLRNTSFKDCTLTD.

In terms of assembly, interacts with the host kinesin light chain (KLC), a subunit of the kinesin-1 motor complex.

It is found in the secreted. The protein localises to the host membrane. In terms of biological role, effector proteins function to alter host cell physiology and promote bacterial survival in host tissues. Involved in the reorganization of late endosome/lysosome (LE/Lys) compartments in mammalian cells. Necessary and sufficient to link kinesin-1 onto the Salmonella-containing vacuole (SCV) membrane. Required for centrifugal extension of lysosomal glycoprotein-rich membrane tubules, known as Salmonella-induced filaments (Sifs), away from the SCV and toward the cell periphery. Required for virulence, but not for intracellular survival and replication in phagocytic cells. The protein is Secreted effector protein PipB2 (pipB2) of Salmonella typhi.